Consider the following 606-residue polypeptide: MACPF domain-containing protein At4g24290 (606 aa).

Residues 1-332 (MALRLPASKA…PPIEELHQFL (332 aa)) form the MACPF domain.

It belongs to the complement C6/C7/C8/C9 (TC 1.C.39) family.

Its function is as follows. Negatively controls the salicylic acid (SA)-mediated pathway of programmed cell death in plant immunity. The protein is MACPF domain-containing protein At4g24290 of Arabidopsis thaliana (Mouse-ear cress).